Here is a 463-residue protein sequence, read N- to C-terminus: Dihydrolipoyllysine-residue succinyltransferase component of 2-oxoglutarate dehydrogenase complex, mitochondrial (463 aa).

In terms of domain architecture, Lipoyl-binding spans 73–148 (STSIEVPPMA…TVGEELAQVE (76 aa)). Residue lysine 114 is modified to N6-lipoyllysine. The segment at 144 to 237 (LAQVEPGEAP…FTPFPRTETR (94 aa)) is disordered. A compositionally biased stretch (low complexity) spans 148-157 (EPGEAPAEGS). Residues 184-212 (TASKKEAAPKKEAAPKKEVTEPKKADQPK) show a composition bias toward basic and acidic residues. 3 repeat units span residues 185 to 190 (ASKKEA), 191 to 196 (APKKEA), and 197 to 202 (APKKEV). The interval 185–209 (ASKKEAAPKKEAAPKKEVTEPKKAD) is 4 X 6 AA approximate tandem repeats of A-[SP]-K-K-E-[AV]. The 4; approximate repeat unit spans residues 204–209 (EPKKAD). Threonine 340 carries the phosphothreonine modification. Active-site residues include histidine 435 and aspartate 439.

It belongs to the 2-oxoacid dehydrogenase family. Component of the 2-oxoglutarate dehydrogenase complex (OGDC), also called alpha-ketoglutarate dehydrogenase (KGDH) complex. The copmplex is composed of the catalytic subunits OGDH (2-oxoglutarate dehydrogenase KGD1; also called E1 subunit), DLST (dihydrolipoamide succinyltransferase KGD2; also called E2 subunit) and DLD (dihydrolipoamide dehydrogenase LPD1; also called E3 subunit), and the assembly factor KGD4. Requires (R)-lipoate as cofactor.

The protein resides in the mitochondrion. It catalyses the reaction N(6)-[(R)-dihydrolipoyl]-L-lysyl-[protein] + succinyl-CoA = N(6)-[(R)-S(8)-succinyldihydrolipoyl]-L-lysyl-[protein] + CoA. It participates in amino-acid degradation; L-lysine degradation via saccharopine pathway; glutaryl-CoA from L-lysine: step 6/6. Its function is as follows. The 2-oxoglutarate dehydrogenase complex catalyzes the overall conversion of 2-oxoglutarate to succinyl-CoA and CO(2). It contains multiple copies of three enzymatic components: 2-oxoglutarate dehydrogenase (E1), dihydrolipoamide succinyltransferase (E2) and lipoamide dehydrogenase (E3). This Saccharomyces cerevisiae (strain ATCC 204508 / S288c) (Baker's yeast) protein is Dihydrolipoyllysine-residue succinyltransferase component of 2-oxoglutarate dehydrogenase complex, mitochondrial (KGD2).